We begin with the raw amino-acid sequence, 343 residues long: Uroporphyrinogen decarboxylase (343 aa).

Substrate is bound by residues arginine 23 to arginine 27, phenylalanine 42, aspartate 73, tyrosine 150, serine 205, and histidine 322.

It belongs to the uroporphyrinogen decarboxylase family. As to quaternary structure, homodimer.

The protein resides in the cytoplasm. The catalysed reaction is uroporphyrinogen III + 4 H(+) = coproporphyrinogen III + 4 CO2. It functions in the pathway porphyrin-containing compound metabolism; protoporphyrin-IX biosynthesis; coproporphyrinogen-III from 5-aminolevulinate: step 4/4. Its activity is regulated as follows. Inhibited by N-ethyl-maleimide and phenylglyoxal. Catalyzes the decarboxylation of four acetate groups of uroporphyrinogen-III to yield coproporphyrinogen-III. The sequence is that of Uroporphyrinogen decarboxylase (hemE) from Cereibacter sphaeroides (strain ATCC 17023 / DSM 158 / JCM 6121 / CCUG 31486 / LMG 2827 / NBRC 12203 / NCIMB 8253 / ATH 2.4.1.) (Rhodobacter sphaeroides).